The primary structure comprises 384 residues: Ribonucleoside-diphosphate reductase small chain (384 aa).

Residues Asp-130, Glu-161, and His-164 each contribute to the Fe cation site. Tyr-168 is an active-site residue. Glu-224, Glu-258, and His-261 together coordinate Fe cation.

It belongs to the ribonucleoside diphosphate reductase small chain family. As to quaternary structure, heterodimer of a large and a small subunit. The cofactor is Fe cation.

The catalysed reaction is a 2'-deoxyribonucleoside 5'-diphosphate + [thioredoxin]-disulfide + H2O = a ribonucleoside 5'-diphosphate + [thioredoxin]-dithiol. Functionally, provides the precursors necessary for DNA synthesis. Catalyzes the biosynthesis of deoxyribonucleotides from the corresponding ribonucleotides. In Spisula solidissima (Atlantic surf-clam), this protein is Ribonucleoside-diphosphate reductase small chain.